A 514-amino-acid polypeptide reads, in one-letter code: 1-pyrroline-5-carboxylate dehydrogenase (514 aa).

Residues Glu-286 and Cys-320 contribute to the active site.

This sequence belongs to the aldehyde dehydrogenase family. RocA subfamily.

The catalysed reaction is L-glutamate 5-semialdehyde + NAD(+) + H2O = L-glutamate + NADH + 2 H(+). The protein operates within amino-acid degradation; L-proline degradation into L-glutamate; L-glutamate from L-proline: step 2/2. In Staphylococcus epidermidis (strain ATCC 12228 / FDA PCI 1200), this protein is 1-pyrroline-5-carboxylate dehydrogenase.